The chain runs to 343 residues: 4-hydroxy-2-oxovalerate aldolase 1 (343 aa).

Positions 8 to 260 constitute a Pyruvate carboxyltransferase domain; sequence VTVHDMTLRD…ETGVDVAKIT (253 aa). Substrate is bound at residue 16 to 17; it reads RD. Position 17 (D17) interacts with Mn(2+). H20 (proton acceptor) is an active-site residue. Residues S170 and H199 each coordinate substrate. 2 residues coordinate Mn(2+): H199 and H201. Y290 provides a ligand contact to substrate.

This sequence belongs to the 4-hydroxy-2-oxovalerate aldolase family.

The catalysed reaction is (S)-4-hydroxy-2-oxopentanoate = acetaldehyde + pyruvate. This chain is 4-hydroxy-2-oxovalerate aldolase 1, found in Dechloromonas aromatica (strain RCB).